The following is a 900-amino-acid chain: uncharacterized protein (900 aa).

Basic and acidic residues predominate over residues 1–16 (MGSNKEAKNIDSKNDR). Disordered regions lie at residues 1–84 (MGSN…KLSS), 103–160 (NSSR…PDPS), 512–556 (NFNQ…KKSG), 568–613 (LAST…KSAN), and 648–676 (KRSSNAQLQPEDEPPLSSPISSNSDNSFP). Residues 17 to 27 (GLTSITSNKIS) are compositionally biased toward polar residues. Over residues 30-58 (KAHDNHTSSMITEHKNADKEKGKQEKESR) the composition is skewed to basic and acidic residues. Composition is skewed to low complexity over residues 63–76 (QSSSSVESHSPQVS) and 103–127 (NSSRRSSDSAASSSVSKLKSAQLSK). A Phosphoserine modification is found at Ser-105. The span at 129 to 143 (GLHHHHTSNNKHSHR) shows a compositional bias: basic residues. Residues 528 to 537 (SSRSLSLPSS) are compositionally biased toward low complexity. Residues 543-553 (KRKKSPTKATK) show a composition bias toward basic residues. Composition is skewed to low complexity over residues 570-601 (STSHTTSPSVSPSISSSSSPKIQPQSHISSPP) and 665-676 (SPISSNSDNSFP).

This is an uncharacterized protein from Saccharomyces cerevisiae (strain ATCC 204508 / S288c) (Baker's yeast).